We begin with the raw amino-acid sequence, 211 residues long: ATP-dependent Clp protease proteolytic subunit 1 (211 aa).

The Nucleophile role is filled by Ser-107. His-132 is an active-site residue.

This sequence belongs to the peptidase S14 family. Fourteen ClpP subunits assemble into 2 heptameric rings which stack back to back to give a disk-like structure with a central cavity, resembling the structure of eukaryotic proteasomes.

Its subcellular location is the cytoplasm. The catalysed reaction is Hydrolysis of proteins to small peptides in the presence of ATP and magnesium. alpha-casein is the usual test substrate. In the absence of ATP, only oligopeptides shorter than five residues are hydrolyzed (such as succinyl-Leu-Tyr-|-NHMec, and Leu-Tyr-Leu-|-Tyr-Trp, in which cleavage of the -Tyr-|-Leu- and -Tyr-|-Trp bonds also occurs).. Functionally, cleaves peptides in various proteins in a process that requires ATP hydrolysis. Has a chymotrypsin-like activity. Plays a major role in the degradation of misfolded proteins. This Mycolicibacterium paratuberculosis (strain ATCC BAA-968 / K-10) (Mycobacterium paratuberculosis) protein is ATP-dependent Clp protease proteolytic subunit 1.